Reading from the N-terminus, the 369-residue chain is Tetraacyldisaccharide 4'-kinase (369 aa).

Residue 68–75 coordinates ATP; sequence VVGGTGKT.

The protein belongs to the LpxK family.

The enzyme catalyses a lipid A disaccharide + ATP = a lipid IVA + ADP + H(+). Its pathway is glycolipid biosynthesis; lipid IV(A) biosynthesis; lipid IV(A) from (3R)-3-hydroxytetradecanoyl-[acyl-carrier-protein] and UDP-N-acetyl-alpha-D-glucosamine: step 6/6. Transfers the gamma-phosphate of ATP to the 4'-position of a tetraacyldisaccharide 1-phosphate intermediate (termed DS-1-P) to form tetraacyldisaccharide 1,4'-bis-phosphate (lipid IVA). This is Tetraacyldisaccharide 4'-kinase from Chlamydia trachomatis serovar D (strain ATCC VR-885 / DSM 19411 / UW-3/Cx).